Consider the following 311-residue polypeptide: Ferrochelatase (311 aa).

The Fe cation site is built by H179 and E260.

Belongs to the ferrochelatase family.

It localises to the cytoplasm. The catalysed reaction is heme b + 2 H(+) = protoporphyrin IX + Fe(2+). It participates in porphyrin-containing compound metabolism; protoheme biosynthesis; protoheme from protoporphyrin-IX: step 1/1. Catalyzes the ferrous insertion into protoporphyrin IX. This is Ferrochelatase from Helicobacter hepaticus (strain ATCC 51449 / 3B1).